The chain runs to 130 residues: Ribonuclease P protein component (130 aa).

This sequence belongs to the RnpA family. In terms of assembly, consists of a catalytic RNA component (M1 or rnpB) and a protein subunit.

The enzyme catalyses Endonucleolytic cleavage of RNA, removing 5'-extranucleotides from tRNA precursor.. Its function is as follows. RNaseP catalyzes the removal of the 5'-leader sequence from pre-tRNA to produce the mature 5'-terminus. It can also cleave other RNA substrates such as 4.5S RNA. The protein component plays an auxiliary but essential role in vivo by binding to the 5'-leader sequence and broadening the substrate specificity of the ribozyme. The polypeptide is Ribonuclease P protein component (Psychrobacter sp. (strain PRwf-1)).